The sequence spans 1414 residues: Protein KATNIP homolog (1414 aa).

Disordered regions lie at residues 1-32 (MHGK…DEKH), 80-116 (QQST…PGKI), 139-158 (GPNT…NEDQ), 712-731 (VSAT…NDLT), 756-783 (SSSS…TFTN), 823-861 (KMDN…SEKY), and 924-943 (QQQK…SLMP). Basic and acidic residues-rich tracts occupy residues 10-32 (RKND…DEKH) and 86-101 (LARE…DDGC). A compositionally biased stretch (acidic residues) spans 147 to 158 (DFESDDDMNEDQ). Composition is skewed to polar residues over residues 832–843 (NFSNQSSYNSDR) and 924–940 (QQQK…NGSS).

It is found in the cytoplasm. The protein resides in the cytoskeleton. It localises to the cilium axoneme. Its subcellular location is the cilium basal body. May control cilium integrity. The sequence is that of Protein KATNIP homolog from Xenopus laevis (African clawed frog).